We begin with the raw amino-acid sequence, 418 residues long: D-inositol 3-phosphate glycosyltransferase (418 aa).

His9 lines the 1D-myo-inositol 3-phosphate pocket. UDP-N-acetyl-alpha-D-glucosamine contacts are provided by residues 15 to 16 and Gly23; that span reads QP. Residues 20-25, Lys78, Tyr110, Thr134, and Arg154 each bind 1D-myo-inositol 3-phosphate; that span reads DSGGMN. Arg231, Lys236, and Arg294 together coordinate UDP-N-acetyl-alpha-D-glucosamine. Residues Tyr303, Arg304, and Ala306 each contribute to the Mg(2+) site. UDP-N-acetyl-alpha-D-glucosamine contacts are provided by Glu316 and Glu324. Thr330 contacts Mg(2+).

The protein belongs to the glycosyltransferase group 1 family. MshA subfamily. Homodimer.

The enzyme catalyses 1D-myo-inositol 3-phosphate + UDP-N-acetyl-alpha-D-glucosamine = 1D-myo-inositol 2-acetamido-2-deoxy-alpha-D-glucopyranoside 3-phosphate + UDP + H(+). Catalyzes the transfer of a N-acetyl-glucosamine moiety to 1D-myo-inositol 3-phosphate to produce 1D-myo-inositol 2-acetamido-2-deoxy-glucopyranoside 3-phosphate in the mycothiol biosynthesis pathway. This chain is D-inositol 3-phosphate glycosyltransferase, found in Corynebacterium glutamicum (strain R).